The following is a 213-amino-acid chain: N-(5'-phosphoribosyl)anthranilate isomerase (213 aa).

The protein belongs to the TrpF family.

It carries out the reaction N-(5-phospho-beta-D-ribosyl)anthranilate = 1-(2-carboxyphenylamino)-1-deoxy-D-ribulose 5-phosphate. The protein operates within amino-acid biosynthesis; L-tryptophan biosynthesis; L-tryptophan from chorismate: step 3/5. The protein is N-(5'-phosphoribosyl)anthranilate isomerase of Hahella chejuensis (strain KCTC 2396).